Consider the following 271-residue polypeptide: Ribosomal RNA small subunit methyltransferase A (271 aa).

His11, Leu13, Gly38, Glu58, Asp86, and Asn101 together coordinate S-adenosyl-L-methionine.

It belongs to the class I-like SAM-binding methyltransferase superfamily. rRNA adenine N(6)-methyltransferase family. RsmA subfamily.

It localises to the cytoplasm. The catalysed reaction is adenosine(1518)/adenosine(1519) in 16S rRNA + 4 S-adenosyl-L-methionine = N(6)-dimethyladenosine(1518)/N(6)-dimethyladenosine(1519) in 16S rRNA + 4 S-adenosyl-L-homocysteine + 4 H(+). In terms of biological role, specifically dimethylates two adjacent adenosines (A1518 and A1519) in the loop of a conserved hairpin near the 3'-end of 16S rRNA in the 30S particle. May play a critical role in biogenesis of 30S subunits. The protein is Ribosomal RNA small subunit methyltransferase A of Helicobacter pylori (strain P12).